A 66-amino-acid chain; its full sequence is Large ribosomal subunit protein bL35 (66 aa).

Residues 1–26 (MPKMKTHRGSAKRFKKTGSGKLKRSH) are compositionally biased toward basic residues. A disordered region spans residues 1–48 (MPKMKTHRGSAKRFKKTGSGKLKRSHAYTSHLFANKSQKQKRKLRKSA).

It belongs to the bacterial ribosomal protein bL35 family. Part of the 50S ribosomal subunit.

This Bacillus subtilis (strain 168) protein is Large ribosomal subunit protein bL35.